A 62-amino-acid chain; its full sequence is Large ribosomal subunit protein bL35 (62 aa).

The segment at 31-62 (HLAQNKTTKQKRQSRKSAQMHSSDLKRFKALI) is disordered. The span at 53-62 (SDLKRFKALI) shows a compositional bias: basic and acidic residues.

Belongs to the bacterial ribosomal protein bL35 family.

The polypeptide is Large ribosomal subunit protein bL35 (Mycoplasmopsis agalactiae (strain NCTC 10123 / CIP 59.7 / PG2) (Mycoplasma agalactiae)).